Here is a 461-residue protein sequence, read N- to C-terminus: Bifunctional protein HldE (461 aa).

Residues 1–312 (MLEFLSQQKP…IKSFNRVDFE (312 aa)) are ribokinase. 191–194 (NKKE) lines the ATP pocket. Asp259 is a catalytic residue. A cytidylyltransferase region spans residues 334 to 461 (FTNGCFDIVH…KIIEKIKDKK (128 aa)).

This sequence in the N-terminal section; belongs to the carbohydrate kinase PfkB family. The protein in the C-terminal section; belongs to the cytidylyltransferase family. Homodimer.

It carries out the reaction D-glycero-beta-D-manno-heptose 7-phosphate + ATP = D-glycero-beta-D-manno-heptose 1,7-bisphosphate + ADP + H(+). It catalyses the reaction D-glycero-beta-D-manno-heptose 1-phosphate + ATP + H(+) = ADP-D-glycero-beta-D-manno-heptose + diphosphate. Its pathway is nucleotide-sugar biosynthesis; ADP-L-glycero-beta-D-manno-heptose biosynthesis; ADP-L-glycero-beta-D-manno-heptose from D-glycero-beta-D-manno-heptose 7-phosphate: step 1/4. The protein operates within nucleotide-sugar biosynthesis; ADP-L-glycero-beta-D-manno-heptose biosynthesis; ADP-L-glycero-beta-D-manno-heptose from D-glycero-beta-D-manno-heptose 7-phosphate: step 3/4. Catalyzes the phosphorylation of D-glycero-D-manno-heptose 7-phosphate at the C-1 position to selectively form D-glycero-beta-D-manno-heptose-1,7-bisphosphate. In terms of biological role, catalyzes the ADP transfer from ATP to D-glycero-beta-D-manno-heptose 1-phosphate, yielding ADP-D-glycero-beta-D-manno-heptose. The chain is Bifunctional protein HldE from Campylobacter jejuni subsp. doylei (strain ATCC BAA-1458 / RM4099 / 269.97).